A 283-amino-acid chain; its full sequence is RNase adapter protein RapZ (283 aa).

8–15 (GRSGSGKS) provides a ligand contact to ATP. Residue 56–59 (DVRN) participates in GTP binding. The RNA-binding stretch occupies residues 266 to 283 (RARGKNVQSRHRTLEKRK).

The protein belongs to the RapZ-like family. RapZ subfamily. Homotrimer.

In terms of biological role, modulates the synthesis of GlmS, by affecting the processing and stability of the regulatory small RNA GlmZ. When glucosamine-6-phosphate (GlcN6P) concentrations are high in the cell, RapZ binds GlmZ and targets it to cleavage by RNase E. Consequently, GlmZ is inactivated and unable to activate GlmS synthesis. Under low GlcN6P concentrations, RapZ is sequestered and inactivated by an other regulatory small RNA, GlmY, preventing GlmZ degradation and leading to synthesis of GlmS. In Yersinia enterocolitica serotype O:8 / biotype 1B (strain NCTC 13174 / 8081), this protein is RNase adapter protein RapZ.